A 69-amino-acid chain; its full sequence is Defensin-like protein 166 (69 aa).

Positions 1-15 (MIIVIIFLVIYFNNQ) are cleaved as a signal peptide. 4 cysteine pairs are disulfide-bonded: cysteine 19/cysteine 68, cysteine 24/cysteine 44, cysteine 29/cysteine 62, and cysteine 33/cysteine 64.

This sequence belongs to the DEFL family.

Its subcellular location is the secreted. This is Defensin-like protein 166 from Arabidopsis thaliana (Mouse-ear cress).